Here is a 275-residue protein sequence, read N- to C-terminus: Probable endonuclease lcl3 (275 aa).

The tract at residues 1 to 25 (MRWPPWASNTQASNNDHPTTTNNND) is disordered. The span at 14–25 (NNDHPTTTNNND) shows a compositional bias: low complexity. The chain crosses the membrane as a helical span at residues 41–57 (LIPTLVLTTGILSAFTL). The 169-residue stretch at 79-247 (RSILGKVTSV…KARGLGLWKG (169 aa)) folds into the TNase-like domain. The active site involves Arg-130. Asp-135 serves as a coordination point for Ca(2+). Residues Glu-138 and Arg-178 contribute to the active site.

The protein belongs to the LCL3 family.

It is found in the mitochondrion. It localises to the membrane. This chain is Probable endonuclease lcl3 (lcl3), found in Aspergillus niger (strain ATCC MYA-4892 / CBS 513.88 / FGSC A1513).